A 493-amino-acid polypeptide reads, in one-letter code: UDP-N-acetylmuramoyl-L-alanyl-D-glutamate--2,6-diaminopimelate ligase (493 aa).

Threonine 32 provides a ligand contact to UDP-N-acetyl-alpha-D-muramoyl-L-alanyl-D-glutamate. Residue 110 to 116 (GTNGKTT) coordinates ATP. Residues asparagine 151, 152-153 (TT), serine 179, and arginine 187 contribute to the UDP-N-acetyl-alpha-D-muramoyl-L-alanyl-D-glutamate site. Position 219 is an N6-carboxylysine (lysine 219). Meso-2,6-diaminopimelate is bound by residues arginine 386, 410–413 (DNPR), glycine 460, and glutamate 464. The short motif at 410-413 (DNPR) is the Meso-diaminopimelate recognition motif element.

Belongs to the MurCDEF family. MurE subfamily. Mg(2+) serves as cofactor. Post-translationally, carboxylation is probably crucial for Mg(2+) binding and, consequently, for the gamma-phosphate positioning of ATP.

The protein resides in the cytoplasm. It carries out the reaction UDP-N-acetyl-alpha-D-muramoyl-L-alanyl-D-glutamate + meso-2,6-diaminopimelate + ATP = UDP-N-acetyl-alpha-D-muramoyl-L-alanyl-gamma-D-glutamyl-meso-2,6-diaminopimelate + ADP + phosphate + H(+). It functions in the pathway cell wall biogenesis; peptidoglycan biosynthesis. Functionally, catalyzes the addition of meso-diaminopimelic acid to the nucleotide precursor UDP-N-acetylmuramoyl-L-alanyl-D-glutamate (UMAG) in the biosynthesis of bacterial cell-wall peptidoglycan. This Lactiplantibacillus plantarum (strain ATCC BAA-793 / NCIMB 8826 / WCFS1) (Lactobacillus plantarum) protein is UDP-N-acetylmuramoyl-L-alanyl-D-glutamate--2,6-diaminopimelate ligase.